Here is a 451-residue protein sequence, read N- to C-terminus: Probable V-type proton ATPase subunit H 1 (451 aa).

It belongs to the V-ATPase H subunit family. As to quaternary structure, V-ATPase is a heteromultimeric enzyme made up of two complexes: the ATP-hydrolytic V1 complex and the proton translocation V0 complex. The V1 complex consists of three catalytic AB heterodimers that form a heterohexamer, three peripheral stalks each consisting of EG heterodimers, one central rotor including subunits D and F, and the regulatory subunits C and H. The proton translocation complex V0 consists of the proton transport subunit a, a ring of proteolipid subunits c9c'', rotary subunit d, subunits e and f, and the accessory subunits vah-19/Ac45 and vah-20/PRR.

Subunit of the V1 complex of vacuolar(H+)-ATPase (V-ATPase), a multisubunit enzyme composed of a peripheral complex (V1) that hydrolyzes ATP and a membrane integral complex (V0) that translocates protons. V-ATPase is responsible for acidifying and maintaining the pH of intracellular compartments and in some cell types, is targeted to the plasma membrane, where it is responsible for acidifying the extracellular environment. Subunit H is essential for V-ATPase activity, but not for the assembly of the complex. This Caenorhabditis elegans protein is Probable V-type proton ATPase subunit H 1.